Reading from the N-terminus, the 165-residue chain is LOB domain-containing protein 21 (165 aa).

Positions 10 to 111 (SSCAACKLLK…HDLAVARTRL (102 aa)) constitute an LOB domain.

It belongs to the LOB domain-containing protein family.

The sequence is that of LOB domain-containing protein 21 (LBD21) from Arabidopsis thaliana (Mouse-ear cress).